Here is a 43-residue protein sequence, read N- to C-terminus: Augerpeptide hhe9.2 (43 aa).

An EGF-like domain is found at 2–40 (EEVGCFPNVCKNDGNCSIETSTGMTRCQCLEGYTGHVCE). 3 disulfide bridges follow: Cys6/Cys28, Cys11/Cys30, and Cys17/Cys39.

In terms of tissue distribution, expressed by the venom duct.

The protein resides in the secreted. The protein is Augerpeptide hhe9.2 of Hastula hectica (Sea snail).